The chain runs to 124 residues: Holo-[acyl-carrier-protein] synthase (124 aa).

Mg(2+) is bound by residues Asp8 and Glu57.

It belongs to the P-Pant transferase superfamily. AcpS family. It depends on Mg(2+) as a cofactor.

The protein localises to the cytoplasm. The catalysed reaction is apo-[ACP] + CoA = holo-[ACP] + adenosine 3',5'-bisphosphate + H(+). Transfers the 4'-phosphopantetheine moiety from coenzyme A to a Ser of acyl-carrier-protein. This chain is Holo-[acyl-carrier-protein] synthase, found in Leptospira borgpetersenii serovar Hardjo-bovis (strain JB197).